A 76-amino-acid chain; its full sequence is MARYFRRRKFCRFTAENVTEIDYKDIVTLKNYITESGKIVPSRITGTRAKYQRQLARAIKRARYLALLPYTDLHNK.

Belongs to the bacterial ribosomal protein bS18 family. In terms of assembly, part of the 30S ribosomal subunit. Forms a tight heterodimer with protein bS6.

Its function is as follows. Binds as a heterodimer with protein bS6 to the central domain of the 16S rRNA, where it helps stabilize the platform of the 30S subunit. The sequence is that of Small ribosomal subunit protein bS18 from Aeromonas hydrophila subsp. hydrophila (strain ATCC 7966 / DSM 30187 / BCRC 13018 / CCUG 14551 / JCM 1027 / KCTC 2358 / NCIMB 9240 / NCTC 8049).